A 146-amino-acid chain; its full sequence is Benzoylsuccinyl-CoA thiolase subunit BbsA (146 aa).

Zn(2+) contacts are provided by Cys42, Cys45, Cys55, and Cys58.

The protein belongs to the BbsA family. As to quaternary structure, heterotetramer composed of two BbsA subunits and two BbsB subunits. Both BbsA and BbsB are essential for enzymatic activity.

It catalyses the reaction (S)-2-benzoylsuccinyl-CoA + CoA = benzoyl-CoA + succinyl-CoA. It participates in xenobiotic degradation; toluene degradation. Component of the BbsAB thiolase complex, which catalyzes the thiolytic cleavage of (S)-2-benzoylsuccinyl-CoA to succinyl-CoA and benzoyl-CoA, the final step of anaerobic toluene metabolism. The BbsA subunit critically contributes to an induced-fit process for productive binding of a CoA substrate into the active site of BbsB. This is Benzoylsuccinyl-CoA thiolase subunit BbsA from Geobacter metallireducens (strain ATCC 53774 / DSM 7210 / GS-15).